The primary structure comprises 247 residues: Homeobox protein BarH-like 1b (247 aa).

Disordered stretches follow at residues 118 to 138 (RGKL…GRRS) and 197 to 247 (GGGL…SQEE). Positions 135 to 194 (GRRSRTVFTELQLMGLEKRFEKQKYLSTPDRIDLAESLGLSQLQVKTWYQNRRMKWKKIV) form a DNA-binding region, homeobox. The segment covering 223-234 (EQERARDAEKPP) has biased composition (basic and acidic residues).

The protein belongs to the BAR homeobox family. As to quaternary structure, interacts with serum response factor (SRF). Expressed in smooth muscle cells of the upper digestive organs and their attached arteries and to craniofacial structures.

Its subcellular location is the nucleus. Its function is as follows. Transcription factor which is involved with the serum response factor (SRF) in the smooth muscle cell-specific transcription of the beta-tropomyosin gene in the upper digestive organs and their attached arteries. The polypeptide is Homeobox protein BarH-like 1b (BARX1B) (Gallus gallus (Chicken)).